A 351-amino-acid chain; its full sequence is Adenine deaminase (351 aa).

Residues H20, H22, and H200 each coordinate Zn(2+). Catalysis depends on E203, which acts as the Proton donor. Position 281 (D281) interacts with Zn(2+). D282 contacts substrate.

Belongs to the metallo-dependent hydrolases superfamily. Adenosine and AMP deaminases family. Adenine deaminase type 2 subfamily. Zn(2+) serves as cofactor.

The catalysed reaction is adenine + H2O + H(+) = hypoxanthine + NH4(+). Its function is as follows. Catalyzes the hydrolytic deamination of adenine to hypoxanthine. Plays an important role in the purine salvage pathway and in nitrogen catabolism. This is Adenine deaminase from Cupriavidus taiwanensis (strain DSM 17343 / BCRC 17206 / CCUG 44338 / CIP 107171 / LMG 19424 / R1) (Ralstonia taiwanensis (strain LMG 19424)).